Consider the following 276-residue polypeptide: Protein HemX (276 aa).

The next 8 helical transmembrane spans lie at 9–29, 40–60, 66–86, 93–113, 132–152, 187–207, 217–237, and 247–267; these read LNEG…IDFL, FWLL…FMWV, VLNV…LSLV, VDFI…IHTF, LVIH…SFVF, VLNV…VIWA, FDAK…YLYI, and VAAL…FLLG.

This sequence to M.leprae U1620K.

It localises to the cell membrane. Functionally, required for HemL synthesis. In Bacillus subtilis (strain 168), this protein is Protein HemX (hemX).